The chain runs to 273 residues: Torsin-1A (273 aa).

The segment at 45–205 (KPKKPLTLSL…VSVFNNKNSG (161 aa)) is interaction with SNAPIN. Position 56–63 (56–63 (GWTGTGKN)) interacts with ATP. N-linked (GlcNAc...) asparagine glycans are attached at residues Asn97 and Asn112.

The protein belongs to the ClpA/ClpB family. Torsin subfamily. Homohexamer. Interacts with TOR1B; the interaction may be specific of neural tissues. Interacts (ATP-bound) with TOR1AIP1 and TOR1AIP2; the interactions induce ATPase activity. Interacts with KLHL14; preferentially when ATP-free. Interacts with KLC1 (via TPR repeats); the interaction associates TOR1A with the kinesin oligomeric complex. Interacts with COPS4; the interaction associates TOR1A with the CSN complex. Interacts with SNAPIN; the interaction is direct and associates SNAPIN with the CSN complex. Interacts with STON2. Interacts (ATP-bound) with SYNE3 (via KASH domain); the interaction is required for SYNE3 nuclear envelope localization. Interacts with VIM; the interaction associates TOR1A with the cytoskeleton. Interacts with PLEC. Interacts (ATP-bound) with SLC6A3; regulates SLC6A3 transport to the plasma membrane. Post-translationally, N-glycosylated.

The protein localises to the endoplasmic reticulum lumen. It localises to the nucleus membrane. The protein resides in the cell projection. Its subcellular location is the growth cone. It is found in the cytoplasmic vesicle membrane. The protein localises to the synapse. It localises to the synaptosome. The protein resides in the cytoplasm. Its subcellular location is the cytoskeleton. It catalyses the reaction ATP + H2O = ADP + phosphate + H(+). Its function is as follows. Protein with chaperone functions important for the control of protein folding, processing, stability and localization as well as for the reduction of misfolded protein aggregates. Involved in the regulation of synaptic vesicle recycling, controls STON2 protein stability in collaboration with the COP9 signalosome complex (CSN). In the nucleus, may link the cytoskeleton with the nuclear envelope, this mechanism seems to be crucial for the control of nuclear polarity, cell movement and, specifically in neurons, nuclear envelope integrity. Participates in the cellular trafficking and may regulate the subcellular location of multipass membrane proteins such as the dopamine transporter SLC6A3, leading to the modulation of dopamine neurotransmission. In the endoplasmic reticulum, plays a role in the quality control of protein folding by increasing clearance of misfolded proteins such as SGCE variants or holding them in an intermediate state for proper refolding. May have a redundant function with TOR1B in non-neural tissues. This chain is Torsin-1A (TOR1A), found in Cricetus cricetus (Black-bellied hamster).